Consider the following 200-residue polypeptide: Glycerol-3-phosphate acyltransferase (200 aa).

The next 4 helical transmembrane spans lie at 1-21 (MITV…FAVV), 84-104 (VIAG…FLAF), 116-136 (ILLG…MVVA), and 159-179 (FLLE…LLIL).

This sequence belongs to the PlsY family. In terms of assembly, probably interacts with PlsX.

The protein resides in the cell inner membrane. The enzyme catalyses an acyl phosphate + sn-glycerol 3-phosphate = a 1-acyl-sn-glycero-3-phosphate + phosphate. It participates in lipid metabolism; phospholipid metabolism. In terms of biological role, catalyzes the transfer of an acyl group from acyl-phosphate (acyl-PO(4)) to glycerol-3-phosphate (G3P) to form lysophosphatidic acid (LPA). This enzyme utilizes acyl-phosphate as fatty acyl donor, but not acyl-CoA or acyl-ACP. The protein is Glycerol-3-phosphate acyltransferase of Nitrosomonas europaea (strain ATCC 19718 / CIP 103999 / KCTC 2705 / NBRC 14298).